Here is a 384-residue protein sequence, read N- to C-terminus: tRNA-specific 2-thiouridylase MnmA (384 aa).

Residues 29-36 (AMSGGVDS) and Leu-55 each bind ATP. Catalysis depends on Cys-123, which acts as the Nucleophile. A disulfide bridge connects residues Cys-123 and Cys-220. Gly-147 provides a ligand contact to ATP. Positions 169–171 (RDQ) are interaction with tRNA. Cys-220 serves as the catalytic Cysteine persulfide intermediate.

The protein belongs to the MnmA/TRMU family.

It localises to the cytoplasm. It carries out the reaction S-sulfanyl-L-cysteinyl-[protein] + uridine(34) in tRNA + AH2 + ATP = 2-thiouridine(34) in tRNA + L-cysteinyl-[protein] + A + AMP + diphosphate + H(+). Catalyzes the 2-thiolation of uridine at the wobble position (U34) of tRNA, leading to the formation of s(2)U34. In Dinoroseobacter shibae (strain DSM 16493 / NCIMB 14021 / DFL 12), this protein is tRNA-specific 2-thiouridylase MnmA.